The following is a 367-amino-acid chain: Ferrochelatase (367 aa).

H226 and E307 together coordinate Fe cation.

It belongs to the ferrochelatase family.

The protein localises to the cytoplasm. It catalyses the reaction heme b + 2 H(+) = protoporphyrin IX + Fe(2+). The protein operates within porphyrin-containing compound metabolism; protoheme biosynthesis; protoheme from protoporphyrin-IX: step 1/1. Its function is as follows. Catalyzes the ferrous insertion into protoporphyrin IX. The protein is Ferrochelatase of Burkholderia pseudomallei (strain 1106a).